A 193-amino-acid polypeptide reads, in one-letter code: Acyl carrier protein phosphodiesterase (193 aa).

This sequence belongs to the AcpH family.

The enzyme catalyses holo-[ACP] + H2O = apo-[ACP] + (R)-4'-phosphopantetheine + H(+). Its function is as follows. Converts holo-ACP to apo-ACP by hydrolytic cleavage of the phosphopantetheine prosthetic group from ACP. This chain is Acyl carrier protein phosphodiesterase, found in Yersinia pestis.